A 311-amino-acid polypeptide reads, in one-letter code: Phospholipid phosphatase 3 (311 aa).

Over 1 to 33 (MQNYKYDKAIVPESKNGGSPALNNNPRRSGSKR) the chain is Cytoplasmic. Ser-19 is subject to Phosphoserine. Residues 34 to 54 (VLLICLDLFCLFMAGLPFLII) traverse the membrane as a helical segment. The Extracellular segment spans residues 55–85 (ETSTIKPYHRGFYCNDESIKYPLKTGETIND). Residues 86–106 (AVLCAVGIVIAILAIITGEFY) traverse the membrane as a helical segment. The Cytoplasmic segment spans residues 107 to 122 (RIYYLKKSRSTIQNPY). A Dityrosine basolateral targeting motif motif is present at residues 109–110 (YY). Residues 123–143 (VAALYKQVGCFLFGCAISQSF) traverse the membrane as a helical segment. The Extracellular segment spans residues 144–193 (TDIAKVSIGRLRPHFLSVCNPDFSQINCSEGYIQNYRCRGDDSKVQEARK). The tract at residues 148–156 (KVSIGRLRP) is phosphatase sequence motif I. N-linked (GlcNAc...) asparagine glycosylation is present at Asn-170. The Integrin-binding motif signature appears at 182 to 184 (RGD). Residues 194–214 (SFFSGHASFSMYTMLYLVLYL) traverse the membrane as a helical segment. The segment at 196–199 (FSGH) is phosphatase sequence motif II. Residue His-199 is the Proton donors of the active site. At 215–225 (QARFTWRGARL) the chain is on the cytoplasmic side. A helical membrane pass occupies residues 226–243 (LRPLLQFTLIMMAFYTGL). A phosphatase sequence motif III region spans residues 244-255 (SRVSDHKHHPSD). The Extracellular segment spans residues 244-257 (SRVSDHKHHPSDVL). The active-site Nucleophile is the His-251. The chain crosses the membrane as a helical span at residues 258-278 (AGFAQGALVACCIVFFVSDLF). The mediates interaction with CTNND1 stretch occupies residues 275-311 (SDLFKTKTTLSLPAPAIRKEILSPVDIIDRNNHHNMM). Over 279–311 (KTKTTLSLPAPAIRKEILSPVDIIDRNNHHNMM) the chain is Cytoplasmic.

The protein belongs to the PA-phosphatase related phosphoesterase family. Forms functional homodimers and homooligomers that are not required for substrate recognition and catalytic activity. Can also form heterooligomers with other PLPP2 and PLPP3. Interacts with CTNND1; negatively regulates the PLPP3-mediated stabilization of beta-catenin/CTNNB1. N-glycosylated. Contains high-mannose oligosaccharides. Ubiquitously expressed. Highly expressed in heart and placenta.

It is found in the cell membrane. Its subcellular location is the basolateral cell membrane. It localises to the endoplasmic reticulum membrane. The protein resides in the endoplasmic reticulum-Golgi intermediate compartment membrane. The protein localises to the golgi apparatus membrane. It is found in the golgi apparatus. Its subcellular location is the trans-Golgi network membrane. It localises to the membrane raft. It catalyses the reaction a 1,2-diacyl-sn-glycero-3-phosphate + H2O = a 1,2-diacyl-sn-glycerol + phosphate. The enzyme catalyses 1,2-dihexadecanoyl-sn-glycero-3-phosphate + H2O = 1,2-dihexadecanoyl-sn-glycerol + phosphate. It carries out the reaction 1,2-di-(9Z-octadecenoyl)-sn-glycero-3-phosphate + H2O = 1,2-di-(9Z-octadecenoyl)-sn-glycerol + phosphate. The catalysed reaction is a monoacyl-sn-glycero-3-phosphate + H2O = a monoacylglycerol + phosphate. It catalyses the reaction (9Z)-octadecenoyl-sn-glycero-3-phosphate + H2O = (9Z-octadecenoyl)-glycerol + phosphate. The enzyme catalyses sphing-4-enine 1-phosphate + H2O = sphing-4-enine + phosphate. It carries out the reaction an N-acylsphing-4-enine 1-phosphate + H2O = an N-acylsphing-4-enine + phosphate. The catalysed reaction is N-(octanoyl)-sphing-4-enine-1-phosphate + H2O = N-octanoylsphing-4-enine + phosphate. It catalyses the reaction N-(9Z-octadecenoyl)-ethanolamine phosphate + H2O = N-(9Z-octadecenoyl) ethanolamine + phosphate. The protein operates within lipid metabolism; phospholipid metabolism. Its activity is regulated as follows. Magnesium-independent phospholipid phosphatase. Insensitive to N-ethylmaleimide. Inhibited by sphingosine, zinc ions and modestly by propanolol. Functionally, magnesium-independent phospholipid phosphatase of the plasma membrane that catalyzes the dephosphorylation of a variety of glycerolipid and sphingolipid phosphate esters including phosphatidate/PA, lysophosphatidate/LPA, diacylglycerol pyrophosphate/DGPP, sphingosine 1-phosphate/S1P and ceramide 1-phosphate/C1P. Also acts on N-oleoyl ethanolamine phosphate/N-(9Z-octadecenoyl)-ethanolamine phosphate, a potential physiological compound. Has both an extracellular and an intracellular phosphatase activity, allowing the hydrolysis and the cellular uptake of these bioactive lipid mediators from the milieu, regulating signal transduction in different cellular processes. Through the dephosphorylation of extracellular sphingosine-1-phosphate and the regulation of its extra- and intracellular availability, plays a role in vascular homeostasis, regulating endothelial cell migration, adhesion, survival, proliferation and the production of pro-inflammatory cytokines. By maintaining the appropriate levels of this lipid in the cerebellum, also ensure its proper development and function. Through its intracellular lipid phosphatase activity may act in early compartments of the secretory pathway, regulating the formation of Golgi to endoplasmic reticulum retrograde transport carriers. In terms of biological role, independently of this phosphatase activity may also function in the Wnt signaling pathway and the stabilization of beta-catenin/CTNNB1, thereby regulating cell proliferation, migration and differentiation in angiogenesis or yet in tumor growth. Also plays a role in integrin-mediated cell-cell adhesion in angiogenesis. In Homo sapiens (Human), this protein is Phospholipid phosphatase 3.